The chain runs to 215 residues: MRTGIIAQKIGMTSVFNDKGERISLTLVKVDDCQVVGHKTLEKHGYNALVVGVKDKKISRVTKPMRQVFANAKISPKTKLKEFRISEENFIDIAASLEVDHFTAGQFVDITATTIGKGFAGSMKRHNFRGLEASHGVSISHRSHGSTGQRQDPGKVFKGKKMAGHMGCNQVTIQNLKIFAVDKERKLIMIQGSIPGHKNSYLSVKDAIKKISITV.

The segment at 136-155 (GVSISHRSHGSTGQRQDPGK) is disordered. Residue glutamine 151 is modified to N5-methylglutamine.

The protein belongs to the universal ribosomal protein uL3 family. As to quaternary structure, part of the 50S ribosomal subunit. Forms a cluster with proteins L14 and L19. Post-translationally, methylated by PrmB.

Functionally, one of the primary rRNA binding proteins, it binds directly near the 3'-end of the 23S rRNA, where it nucleates assembly of the 50S subunit. This Rickettsia africae (strain ESF-5) protein is Large ribosomal subunit protein uL3.